We begin with the raw amino-acid sequence, 95 residues long: Large ribosomal subunit protein bL25 (95 aa).

It belongs to the bacterial ribosomal protein bL25 family. In terms of assembly, part of the 50S ribosomal subunit; part of the 5S rRNA/L5/L18/L25 subcomplex. Contacts the 5S rRNA. Binds to the 5S rRNA independently of L5 and L18.

This is one of the proteins that binds to the 5S RNA in the ribosome where it forms part of the central protuberance. The sequence is that of Large ribosomal subunit protein bL25 from Haemophilus influenzae (strain 86-028NP).